A 551-amino-acid polypeptide reads, in one-letter code: ATP synthase subunit alpha, mitochondrial (551 aa).

Position 210-217 (210-217 (GDRQTGKT)) interacts with ATP.

This sequence belongs to the ATPase alpha/beta chains family. As to quaternary structure, F-type ATPases have 2 components, CF(1) - the catalytic core - and CF(0) - the membrane proton channel. CF(1) has five subunits: alpha(3), beta(3), gamma(1), delta(1), epsilon(1). CF(0) has three main subunits: a, b and c.

Its subcellular location is the mitochondrion. It localises to the mitochondrion inner membrane. Mitochondrial membrane ATP synthase (F(1)F(0) ATP synthase or Complex V) produces ATP from ADP in the presence of a proton gradient across the membrane which is generated by electron transport complexes of the respiratory chain. F-type ATPases consist of two structural domains, F(1) - containing the extramembraneous catalytic core, and F(0) - containing the membrane proton channel, linked together by a central stalk and a peripheral stalk. During catalysis, ATP synthesis in the catalytic domain of F(1) is coupled via a rotary mechanism of the central stalk subunits to proton translocation. Subunits alpha and beta form the catalytic core in F(1). Rotation of the central stalk against the surrounding alpha(3)beta(3) subunits leads to hydrolysis of ATP in three separate catalytic sites on the beta subunits. Subunit alpha does not bear the catalytic high-affinity ATP-binding sites. The chain is ATP synthase subunit alpha, mitochondrial (atp-1) from Neurospora crassa (strain ATCC 24698 / 74-OR23-1A / CBS 708.71 / DSM 1257 / FGSC 987).